A 260-amino-acid chain; its full sequence is HTH-type transcriptional repressor NanR (260 aa).

The segment at 1–20 (MNPFDSQSEDASDAIGRSLG) is disordered. Positions 27–95 (KKLSEMVEEE…NGERARVSRP (69 aa)) constitute an HTH gntR-type domain. The segment at residues 55–74 (ERELMAFFNVGRPSVREALA) is a DNA-binding region (H-T-H motif).

The protein belongs to the NanR family.

In terms of biological role, transcriptional repressor that controls expression of the genes required for the catabolism of sialic acids. In Cronobacter sakazakii (strain ATCC BAA-894) (Enterobacter sakazakii), this protein is HTH-type transcriptional repressor NanR.